The primary structure comprises 188 residues: Tumor necrosis factor alpha-induced protein 8-like protein (188 aa).

This sequence belongs to the TNFAIP8 family.

The sequence is that of Tumor necrosis factor alpha-induced protein 8-like protein from Drosophila pseudoobscura pseudoobscura (Fruit fly).